The chain runs to 263 residues: Small ribosomal subunit protein eS4, Y isoform 1 (263 aa).

One can recognise an S4 RNA-binding domain in the interval 42-104 (LPLIIFLRNR…TGEHFRLVYD (63 aa)).

Belongs to the eukaryotic ribosomal protein eS4 family.

This chain is Small ribosomal subunit protein eS4, Y isoform 1 (RPS4Y1), found in Monodelphis domestica (Gray short-tailed opossum).